Consider the following 447-residue polypeptide: ATP-dependent protease ATPase subunit HslU (447 aa).

Residues isoleucine 18, 60–65 (GVGKTE), aspartate 259, glutamate 325, and arginine 397 each bind ATP.

This sequence belongs to the ClpX chaperone family. HslU subfamily. As to quaternary structure, a double ring-shaped homohexamer of HslV is capped on each side by a ring-shaped HslU homohexamer. The assembly of the HslU/HslV complex is dependent on binding of ATP.

The protein resides in the cytoplasm. In terms of biological role, ATPase subunit of a proteasome-like degradation complex; this subunit has chaperone activity. The binding of ATP and its subsequent hydrolysis by HslU are essential for unfolding of protein substrates subsequently hydrolyzed by HslV. HslU recognizes the N-terminal part of its protein substrates and unfolds these before they are guided to HslV for hydrolysis. The sequence is that of ATP-dependent protease ATPase subunit HslU from Burkholderia pseudomallei (strain K96243).